The sequence spans 140 residues: L-fucose mutarotase (140 aa).

His22 acts as the Proton donor in catalysis. Residues Asp30, Arg107, and 129–131 contribute to the substrate site; that span reads YGN.

This sequence belongs to the RbsD / FucU family. FucU mutarotase subfamily. In terms of assembly, homodecamer.

Its subcellular location is the cytoplasm. It carries out the reaction alpha-L-fucose = beta-L-fucose. The protein operates within carbohydrate metabolism; L-fucose metabolism. Its function is as follows. Involved in the anomeric conversion of L-fucose. The polypeptide is L-fucose mutarotase (Klebsiella pneumoniae subsp. pneumoniae (strain ATCC 700721 / MGH 78578)).